The sequence spans 270 residues: Regulatory protein RecX (270 aa).

It belongs to the RecX family.

The protein localises to the cytoplasm. Modulates RecA activity. This is Regulatory protein RecX from Bacillus cereus (strain ZK / E33L).